A 356-amino-acid chain; its full sequence is Histidinol-phosphate aminotransferase (356 aa).

Lys-214 is modified (N6-(pyridoxal phosphate)lysine).

Belongs to the class-II pyridoxal-phosphate-dependent aminotransferase family. Histidinol-phosphate aminotransferase subfamily. As to quaternary structure, homodimer. Pyridoxal 5'-phosphate is required as a cofactor.

It catalyses the reaction L-histidinol phosphate + 2-oxoglutarate = 3-(imidazol-4-yl)-2-oxopropyl phosphate + L-glutamate. It participates in amino-acid biosynthesis; L-histidine biosynthesis; L-histidine from 5-phospho-alpha-D-ribose 1-diphosphate: step 7/9. The polypeptide is Histidinol-phosphate aminotransferase (Escherichia coli O81 (strain ED1a)).